The primary structure comprises 30 residues: Ornithine carbamoyltransferase, catabolic (30 aa).

It belongs to the aspartate/ornithine carbamoyltransferase superfamily. OTCase family.

The protein localises to the cytoplasm. It catalyses the reaction carbamoyl phosphate + L-ornithine = L-citrulline + phosphate + H(+). Its pathway is amino-acid degradation; L-arginine degradation via ADI pathway; carbamoyl phosphate from L-arginine: step 2/2. The sequence is that of Ornithine carbamoyltransferase, catabolic (arcB) from Aeromonas caviae (Aeromonas punctata).